We begin with the raw amino-acid sequence, 251 residues long: Flap endonuclease Xni (251 aa).

D104 contacts Mg(2+). The region spanning 160–249 is the 5'-3' exonuclease domain; it reads VQPQQLPDYW…IDGNLQQLRL (90 aa). K(+)-binding residues include L171, A172, P180, V182, and I185. The interval 184–189 is interaction with DNA; the sequence is GIGPKS.

Belongs to the Xni family. Mg(2+) is required as a cofactor. Requires K(+) as cofactor.

Has flap endonuclease activity. During DNA replication, flap endonucleases cleave the 5'-overhanging flap structure that is generated by displacement synthesis when DNA polymerase encounters the 5'-end of a downstream Okazaki fragment. This Escherichia coli O17:K52:H18 (strain UMN026 / ExPEC) protein is Flap endonuclease Xni.